The chain runs to 213 residues: Small ribosomal subunit protein uS5 (213 aa).

Residues 1 to 41 (MSGRERNGGRSAENNDKKERNERNGRNDRGGRNDRRNQQDE) are disordered. The region spanning 45-108 (FIERVVTINR…EEARKNFFRV (64 aa)) is the S5 DRBM domain.

This sequence belongs to the universal ribosomal protein uS5 family. Part of the 30S ribosomal subunit. Contacts proteins S4 and S8.

In terms of biological role, with S4 and S12 plays an important role in translational accuracy. Located at the back of the 30S subunit body where it stabilizes the conformation of the head with respect to the body. This is Small ribosomal subunit protein uS5 from Corynebacterium jeikeium (strain K411).